Here is a 121-residue protein sequence, read N- to C-terminus: Large ribosomal subunit protein bL12 (121 aa).

The protein belongs to the bacterial ribosomal protein bL12 family. In terms of assembly, homodimer. Part of the ribosomal stalk of the 50S ribosomal subunit. Forms a multimeric L10(L12)X complex, where L10 forms an elongated spine to which 2 to 4 L12 dimers bind in a sequential fashion. Binds GTP-bound translation factors.

Functionally, forms part of the ribosomal stalk which helps the ribosome interact with GTP-bound translation factors. Is thus essential for accurate translation. The chain is Large ribosomal subunit protein bL12 from Shewanella baltica (strain OS223).